Consider the following 504-residue polypeptide: Topoisomerase I damage affected protein 11 (504 aa).

Residues 32–62 form a disordered region; that stretch reads RKTGRKIRSASSNGYRLEHHRTSSAGSMHSQ. Residues 179 to 231 adopt a coiled-coil conformation; sequence ALLQSLATKELELLECKQKIEDLKKQTQHEEQNYTRRARELHELKEQVSKHLD. At T236 the chain carries Phosphothreonine. Phosphoserine is present on residues S244 and S286. Disordered stretches follow at residues 252-306, 332-377, and 400-504; these read LESR…SKQS, WDDS…SVSR, and DVIT…MTDF. Polar residues predominate over residues 257–287; it reads ENAGNSSLPSSVSKPKNMGHQSTNQSRSVSP. Over residues 290 to 301 the composition is skewed to basic and acidic residues; sequence IQERRQRDDSSD. 2 stretches are compositionally biased toward polar residues: residues 332–359 and 368–377; these read WDDS…QQYD and KSPSQGSVSR. The span at 403 to 421 shows a compositional bias: basic and acidic residues; sequence TDNRCDPVYKSDRQHEQKK. A compositionally biased stretch (basic residues) spans 470 to 479; the sequence is TREKKSKRSS. Over residues 491 to 504 the composition is skewed to polar residues; it reads DNSSVKNSVEMTDF.

Belongs to the TDA11 family.

The protein localises to the cytoplasm. This chain is Topoisomerase I damage affected protein 11 (TDA11), found in Saccharomyces cerevisiae (strain ATCC 204508 / S288c) (Baker's yeast).